Here is a 670-residue protein sequence, read N- to C-terminus: Protein ACCELERATED CELL DEATH 6 (670 aa).

Topologically, residues 1–456 (MDSSGADLDR…PNYIFHERWT (456 aa)) are cytoplasmic. The segment at 18-47 (LVSHDQRKDFSHSGGVGTTSPTGDTEPVPK) is disordered. ANK repeat units lie at residues 66–95 (EMTP…PMER), 100–129 (TGDS…CLLF), 134–163 (SRQT…SALA), 182–211 (DGNT…DAPF), 216–248 (KGIS…NVDR), 260–290 (QGNK…SLMD), 295–325 (DGRT…GVYV), 329–358 (DGSF…ASKY), 363–391 (LGQN…DTKH), and 399–428 (DGNT…EILK). The chain crosses the membrane as a helical span at residues 457-477 (LALLLYAIHSSGFESVKSLTI). Residues 478–492 (QSVPLDPKKNRHYVN) lie on the Extracellular side of the membrane. The helical transmembrane segment at 493 to 513 (ALLVVAALVATVTFAAGFTIP) threads the bilayer. Over 514 to 537 (GGYISDSKKPNLGRATLATNPTLF) the chain is Cytoplasmic. The helical transmembrane segment at 538-558 (IFLLFDILAMQSSVATICTLI) threads the bilayer. The Extracellular portion of the chain corresponds to 559-577 (WAQLGDLALILKSLHVALP). The helical transmembrane segment at 578–598 (LLLFSLLCMPVAFLFGVITAI) threads the bilayer. Residues 599 to 602 (AHVK) are Cytoplasmic-facing. A helical transmembrane segment spans residues 603 to 623 (WLLVTISIISGGFFLFAIFIL). The Extracellular portion of the chain corresponds to 624 to 638 (GPHVMLQRSHLPPSS). Residues 639–659 (GIFLKTFMLTIDISELFVILI) form a helical membrane-spanning segment. Topologically, residues 660 to 670 (KACFGCVACSE) are cytoplasmic.

Component of large complexes containing, at least, FLS2, HSP70 and ACD6 in endoplasmic reticulum, plasma membrane and soluble fraction. Associated with HSP70 proteins during endoplasmic reticulum-associated degradation (ERAD). Reduced complex levels upon benzothiazole (BTH) treatment. Post-translationally, ubiquitinated. As to expression, basal expression requires light and salicylic acid (SA).

Its subcellular location is the cell membrane. The protein resides in the endoplasmic reticulum membrane. In terms of biological role, dose-dependent activator of the defense response against virulent pathogens, including bacteria, fungi and oomycetes, that acts in a positive feedback loop with the defense signal salicylic acid (SA). Regulates the salicylic acid (SA) signaling pathway leading to cell death and modulating cell fate (e.g. cell enlargement and/or cell division). In response to SA signaling, triggers the accumulation of FLS2 at the plasma membrane, thus priming defenses. Involved in SA-dependent freezing signaling and tolerance. The chain is Protein ACCELERATED CELL DEATH 6 from Arabidopsis thaliana (Mouse-ear cress).